A 139-amino-acid chain; its full sequence is Protein archease (139 aa).

Ca(2+) is bound by residues aspartate 12, aspartate 138, and isoleucine 139.

Belongs to the archease family.

Activates the tRNA-splicing ligase complex by facilitating the enzymatic turnover of catalytic subunit RtcB. Acts by promoting the guanylylation of RtcB, a key intermediate step in tRNA ligation. Can also alter the NTP specificity of RtcB such that ATP, dGTP or ITP is used efficiently. The sequence is that of Protein archease from Saccharolobus islandicus (strain M.16.27) (Sulfolobus islandicus).